Here is a 442-residue protein sequence, read N- to C-terminus: MPAVLLVLYVNPPPSVCILTQKLSLGLYNQWWRVCRSVPPPWYVFFNKRSMSTFKLMMDGRLVFAMAIAILSVVLSCGTCEKAKRAVRGRQDRPKEFPPPRYNYTILTRYNATALASPFINDQVKNVDLRIVTATRPCEMIALIAKTNIDSILKELAAAQKTYSARLTWFKIMPTCATPIHDVSYMKCNPKLSFAMCDERSDILWQASLITMAAETDDELGLVLAAPAHSASGLYRRVIEIDGRRIYTDFSVTIPSERCPIAFELNFGNPDRCKTPEQYSRGEVFTRRFLGEFNFPQGEHMTWVKFWFVYDGGNLPVQFYEAQAFARPVPPDNHPGFDSVESEITQNKTDPKPGQADPKPNQPFKWPSIKHLVPRLDEVDEVIEPVTKPPKTSKSNSTFVGISVGLGIAGLVLVGVILYVCLRRKKELKVCTERLDSPTLDL.

Positions 1–19 (MPAVLLVLYVNPPPSVCIL) are cleaved as a signal peptide. The Virion surface segment spans residues 20 to 405 (TQKLSLGLYN…NSTFVGISVG (386 aa)). 2 N-linked (GlcNAc...) asparagine; by host glycosylation sites follow: Asn103 and Asn111. Cystine bridges form between Cys138/Cys259, Cys176/Cys273, and Cys188/Cys197. Positions 331-364 (PDNHPGFDSVESEITQNKTDPKPGQADPKPNQPF) are disordered. 2 N-linked (GlcNAc...) asparagine; by host glycosylation sites follow: Asn347 and Asn396. The helical transmembrane segment at 406-422 (LGIAGLVLVGVILYVCL) threads the bilayer. The Intravirion segment spans residues 423–442 (RRKKELKVCTERLDSPTLDL).

The protein belongs to the herpesviridae glycoprotein D family.

Its subcellular location is the virion membrane. In terms of biological role, envelope glycoprotein that binds to host cell entry receptors, promoting the virus entry into host cells. May trigger fusion with host membrane, by recruiting the fusion machinery composed of gB and gH/gL. The polypeptide is Envelope glycoprotein D (gD) (Equine herpesvirus 1 (strain Kentucky A) (EHV-1)).